The primary structure comprises 375 residues: RNA exonuclease 4 (375 aa).

Residues Lys21–Phe78 form a disordered region. Low complexity predominate over residues Ser25–Ser35. Residues Thr53–Gly64 are compositionally biased toward basic and acidic residues. The Exonuclease domain maps to Asn134–Glu297.

It belongs to the REXO4 family.

It localises to the nucleus. In terms of biological role, exoribonuclease involved in ribosome biosynthesis. Involved in the processing of ITS1, the internal transcribed spacer localized between the 18S and 5.8S rRNAs. In Mycosarcoma maydis (Corn smut fungus), this protein is RNA exonuclease 4 (REX4).